A 238-amino-acid polypeptide reads, in one-letter code: Accessory gene regulator A (238 aa).

The Response regulatory domain occupies lysine 2–glutamate 125. Aspartate 59 is subject to 4-aspartylphosphate. Positions isoleucine 143–isoleucine 238 constitute an HTH LytTR-type domain.

Its subcellular location is the cytoplasm. Functionally, required for high-level post-exponential phase expression of a series of secreted proteins. The protein is Accessory gene regulator A (agrA) of Staphylococcus aureus (strain COL).